The sequence spans 357 residues: Heme A synthase (357 aa).

Helical transmembrane passes span 24 to 44 (LVRY…MVGG), 110 to 130 (MLAR…WVTG), 140 to 160 (MLGL…MVAS), 175 to 195 (IHLT…RGLV), and 209 to 229 (FAGW…LVAG). Histidine 272 provides a ligand contact to heme. 3 consecutive transmembrane segments (helical) span residues 274–294 (MFAY…WKQV), 303–323 (TIVL…TLLM), and 325–345 (VPLH…AFAV). Residue histidine 333 participates in heme binding.

This sequence belongs to the COX15/CtaA family. Type 2 subfamily. Interacts with CtaB. Requires heme b as cofactor.

Its subcellular location is the cell membrane. It catalyses the reaction Fe(II)-heme o + 2 A + H2O = Fe(II)-heme a + 2 AH2. Its pathway is porphyrin-containing compound metabolism; heme A biosynthesis; heme A from heme O: step 1/1. In terms of biological role, catalyzes the conversion of heme O to heme A by two successive hydroxylations of the methyl group at C8. The first hydroxylation forms heme I, the second hydroxylation results in an unstable dihydroxymethyl group, which spontaneously dehydrates, resulting in the formyl group of heme A. This is Heme A synthase from Brucella anthropi (strain ATCC 49188 / DSM 6882 / CCUG 24695 / JCM 21032 / LMG 3331 / NBRC 15819 / NCTC 12168 / Alc 37) (Ochrobactrum anthropi).